The following is a 211-amino-acid chain: Beta-crystallin B3 (211 aa).

Met-1 is modified (N-acetylmethionine). Residue Ala-2 is modified to N-acetylalanine; in Beta-crystallin B3, N-terminally processed. The N-terminal arm stretch occupies residues 2–23 (AEQHGAPEQAAAGKSHGDLGGS). Beta/gamma crystallin 'Greek key' domains follow at residues 24–63 (YKVILYELENFQGKRCELSAECPSLTDSLLEKVGSIQVES) and 64–108 (GPWL…RPLN). Residues 109-113 (IDSPH) are connecting peptide. Beta/gamma crystallin 'Greek key' domains follow at residues 114-155 (HKLH…RAIN) and 156-198 (GTWV…RRIR). Positions 200-211 (QKWHKRGRFPSS) are C-terminal arm.

This sequence belongs to the beta/gamma-crystallin family. As to quaternary structure, homo/heterodimer, or complexes of higher-order. The structure of beta-crystallin oligomers seems to be stabilized through interactions between the N-terminal arms.

Its function is as follows. Crystallins are the dominant structural components of the vertebrate eye lens. In Homo sapiens (Human), this protein is Beta-crystallin B3 (CRYBB3).